Here is a 126-residue protein sequence, read N- to C-terminus: Fluoride-specific ion channel FluC (126 aa).

4 helical membrane-spanning segments follow: residues 4–24 (FAILGFIALGGAFGACSRYLV), 38–58 (YGTLTVNVVGSFIMGLLIAAF), 71–91 (IIGLGFLGALTTFSTFSMDNV), and 104–124 (LNVVLNVTLSITAAWVGFQLL). Na(+)-binding residues include glycine 78 and threonine 81.

This sequence belongs to the fluoride channel Fluc/FEX (TC 1.A.43) family.

It is found in the cell inner membrane. The catalysed reaction is fluoride(in) = fluoride(out). With respect to regulation, na(+) is not transported, but it plays an essential structural role and its presence is essential for fluoride channel function. Functionally, fluoride-specific ion channel. Important for reducing fluoride concentration in the cell, thus reducing its toxicity. The protein is Fluoride-specific ion channel FluC of Vibrio vulnificus (strain CMCP6).